Reading from the N-terminus, the 336-residue chain is Dihydroorotate dehydrogenase (quinone) (336 aa).

Residues Ala-62–Lys-66 and Thr-86 each bind FMN. Lys-66 is a binding site for substrate. A substrate-binding site is contributed by Asn-111–Phe-115. 2 residues coordinate FMN: Asn-139 and Asn-172. A substrate-binding site is contributed by Asn-172. Ser-175 serves as the catalytic Nucleophile. Asn-177 serves as a coordination point for substrate. Lys-217 and Thr-245 together coordinate FMN. Asn-246–Thr-247 is a substrate binding site. Residues Gly-268, Gly-297, and Tyr-318–Ser-319 contribute to the FMN site.

Belongs to the dihydroorotate dehydrogenase family. Type 2 subfamily. As to quaternary structure, monomer. FMN is required as a cofactor.

It is found in the cell membrane. The enzyme catalyses (S)-dihydroorotate + a quinone = orotate + a quinol. It participates in pyrimidine metabolism; UMP biosynthesis via de novo pathway; orotate from (S)-dihydroorotate (quinone route): step 1/1. Its function is as follows. Catalyzes the conversion of dihydroorotate to orotate with quinone as electron acceptor. This Aeromonas hydrophila subsp. hydrophila (strain ATCC 7966 / DSM 30187 / BCRC 13018 / CCUG 14551 / JCM 1027 / KCTC 2358 / NCIMB 9240 / NCTC 8049) protein is Dihydroorotate dehydrogenase (quinone).